The chain runs to 428 residues: MTGKSVKDVDRYQAVLANLLLEEDNKFCADCQSKGPRWASWNIGVFICIRCAGIHRNLGVHISRVKSVNLDQWTQEQIQCMQEMGNGKANRLYEAYLPETFRRPQIDPAVEGFIRDKYEKKKYMDRSLDINVLRKEKDDKWKRGNEPAPEKKMEPVVFEKVKMPQKKEDAQLPRKSSPKSAAPVMDLLGLDAPVACSIANSKTSNALEKDLDLLASVPSPSSVSRKAVGSMPTAGSAGSVPENLNLFPEPGSKSEETGKKQLSKDSILSLYGSQTPQMPAQAMFMAPAQMAYPTAYPSFPGVTPPNSIMGGMVPPPVGMVAQPGASGMLTPMAMPAGYMGGMQASMMGVPNGMMTTQQAGYMASMAAMPQTVYGVQPAQQLQWNLTQMTQQMAGMNFYGANGMMNYGQSMGGGNGQAANQTLSPQMWK.

Residues 13–139 (QAVLANLLLE…INVLRKEKDD (127 aa)) enclose the Arf-GAP domain. The segment at 28–51 (CADCQSKGPRWASWNIGVFICIRC) adopts a C4-type zinc-finger fold. A phosphoserine mark is found at Ser127, Ser219, Ser224, Ser230, and Ser239. The interaction with clathrin heavy chains stretch occupies residues 163-231 (MPQKKEDAQL…SVSRKAVGSM (69 aa)). Positions 218–262 (PSPSSVSRKAVGSMPTAGSAGSVPENLNLFPEPGSKSEETGKKQL) are disordered. Residues 252-262 (SKSEETGKKQL) are compositionally biased toward basic and acidic residues. The interaction with PICALM stretch occupies residues 339–428 (MGGMQASMMG…NQTLSPQMWK (90 aa)).

As to quaternary structure, interacts with ARF1. Interacts with PICALM and clathrin heavy chains.

It localises to the cytoplasm. In terms of biological role, GTPase activating protein that acts on ARF1. Can also activate ARF6 (in vitro). May play a role in clathrin-dependent retrograde transport from early endosomes to the trans-Golgi network. The sequence is that of Stromal membrane-associated protein 2 (Smap2) from Mus musculus (Mouse).